The primary structure comprises 1025 residues: Multidrug resistance protein MdtC (1025 aa).

The next 12 membrane-spanning stretches (helical) occupy residues 3-23 (FFAL…AITL), 333-353 (EVEQ…FLFL), 360-380 (IIPA…MYLC), 387-407 (LSLM…IVVL), 431-451 (VGFT…PLLL), 463-483 (FAVT…TLTP), 528-548 (LVGV…ISIP), 853-873 (VILI…LYES), 875-895 (VHPL…LLAL), 897-917 (LFNA…IGIV), 953-973 (PIMM…LSGG), and 984-1004 (ITIV…TPVV).

This sequence belongs to the resistance-nodulation-cell division (RND) (TC 2.A.6) family. MdtC subfamily. In terms of assembly, part of a tripartite efflux system composed of MdtA, MdtB and MdtC. MdtC forms a heteromultimer with MdtB.

It is found in the cell inner membrane. Functionally, the MdtABC tripartite complex confers resistance against novobiocin and deoxycholate. In Escherichia coli (strain 55989 / EAEC), this protein is Multidrug resistance protein MdtC.